Here is a 543-residue protein sequence, read N- to C-terminus: Sarafotoxin (543 aa).

The signal sequence occupies residues 1–23 (MALLPRLAAGGLLLLLALAALEG). Positions 24–69 (KPAPSALSQLLEKRSEDQAAAGRIIDGGDTKQAARDPSPQRNVEPL) are excised as a propeptide. Positions 45–65 (GRIIDGGDTKQAARDPSPQRN) are disordered. 12 consecutive repeat copies span residues 51–90 (GDTK…DVIW), 91–130 (RDTK…DVIW), 131–170 (RDTK…DVIW), 171–210 (RDTK…DVIW), 211–250 (RDTK…DVIW), 251–290 (RDTK…GIIW), 291–330 (RDTK…DVIW), 331–370 (RDTK…DVIW), 371–410 (RDTK…DVIW), 411–450 (RDTK…DVIW), 451–490 (RDTK…DVIW), and 491–530 (RDTK…DVIW). Residues 51–530 (GDTKQAARDP…LNFCHQDVIW (480 aa)) form a 12 X 40 AA tandem repeats region. 2 disulfides stabilise this stretch: C70–C84 and C72–C80. The propeptide occupies 92-109 (DTKQAARDPSPQRNVEPL). Intrachain disulfides connect C110–C124 and C112–C120. A propeptide spanning residues 132–149 (DTKQAARDPSPQRNVEPL) is cleaved from the precursor. Cystine bridges form between C150–C164 and C152–C160. A propeptide spanning residues 172–189 (DTKQAARDPSPQRNVEPL) is cleaved from the precursor. 2 disulfides stabilise this stretch: C190/C204 and C192/C200. A propeptide spanning residues 212–229 (DTKQAARDPSPQRNVEPL) is cleaved from the precursor. 2 cysteine pairs are disulfide-bonded: C230–C244 and C232–C240. Positions 252–269 (DTKQAARDPSPQRNVEPL) are excised as a propeptide. Intrachain disulfides connect C270/C284 and C272/C280. Positions 292–309 (DTKQAARDPSPQRNVEPL) are excised as a propeptide. Disulfide bonds link C310–C324 and C312–C320. A propeptide spanning residues 332–349 (DTKQAARDPSPQRNVEPL) is cleaved from the precursor. 2 disulfide bridges follow: C350-C364 and C352-C360. The propeptide occupies 372-389 (DTKQAARDPSPQRNVEPL). Disulfide bonds link C390–C404 and C392–C400. The propeptide occupies 412 to 429 (DTKQAARDPSPQRNVEPL). 2 disulfides stabilise this stretch: C430/C444 and C432/C440. The propeptide occupies 452-469 (DTKQAARDPSPQRNVEPL). 2 disulfide bridges follow: C470-C484 and C472-C480. Positions 492 to 509 (DTKQAARDPSPQRNVEPL) are excised as a propeptide. 2 cysteine pairs are disulfide-bonded: C510/C524 and C512/C520. A propeptide spanning residues 532-543 (NADTSANPEFLG) is cleaved from the precursor.

This sequence belongs to the endothelin/sarafotoxin family. In terms of tissue distribution, expressed by the venom gland.

The protein localises to the secreted. Functionally, vasoconstrictor activity. These toxins cause cardiac arrest probably as a result of coronary vasospasm. In terms of biological role, vasoconstrictor activity. Causes cardiac arrest probably as a result of coronary vasospasm. Displays high agonistic activities towards endothelin-2 receptor (EDNRB) (displays affinity in the picomolar range) and endothelin-1 receptor (EDNRA) (lower affinities). The polypeptide is Sarafotoxin (Atractaspis engaddensis (Israeli burrowing asp)).